A 586-amino-acid chain; its full sequence is BTB/POZ domain and ankyrin repeat-containing protein NPR1 (586 aa).

Positions 63 to 139 (SDADIVVEGI…VYTGKLKPSP (77 aa)) constitute a BTB domain. The C2HC NPR-type zinc-finger motif lies at 142-156 (VSTCVHNVCAHDACR). Residues Cys-145, Cys-150, His-152, and Cys-155 each contribute to the Zn(2+) site. 3 ANK repeats span residues 266–296 (KRIR…TLDE), 298–325 (NALH…DVNL), and 329–358 (RGYT…RASE). Residues 388-522 (EANKDRICID…LDKFIDDDLP (135 aa)) are salicylic acid-binding core (SBC). Salicylate is bound at residue Arg-433. The disordered stretch occupies residues 561 to 586 (NLSGLSSSSSTTSPEKIGANQKVREP). Low complexity predominate over residues 562–573 (LSGLSSSSSTTS).

Belongs to the plant 'ANKYRIN-BTB/POZ' family. 'NPR1-like' subfamily. As to expression, highly expressed in leaves. Expressed at low levels in roots and stems.

It is found in the cytoplasm. The protein localises to the nucleus. It localises to the nuclear body. The protein operates within protein modification; protein ubiquitination. Salicylic acid (SA)-binding substrate-specific adapter of an E3 ubiquitin-protein ligase complex (CUL3-RBX1-BTB) which mediates the ubiquitination and subsequent proteasomal degradation of target proteins. Transcription cofactor that represses gene expression in the absence of salicylic acid (SA), when attached to negative cis-elements (W-box) with WRKY transcription factors, but stimulates gene expression upon activation by SA, when sumoylated and attached to positive cis-elements (as-1) with TGA transcription factors, thus confering immunity through a series of gene regulations ending in a significant increase in antimicrobial and defense genes expression. Probable component of the salicylic acid (SA) defense signaling pathway and pathogen-induced systemic acquired resistance (SAR). May be involved in disease resistance against fungal pathogens. May be involved in tolerance to salt and osmotic stresses. The polypeptide is BTB/POZ domain and ankyrin repeat-containing protein NPR1 (Malus hupehensis (Chinese crab apple)).